The primary structure comprises 226 residues: 2-C-methyl-D-erythritol 4-phosphate cytidylyltransferase (226 aa).

This sequence belongs to the IspD/TarI cytidylyltransferase family. IspD subfamily.

It catalyses the reaction 2-C-methyl-D-erythritol 4-phosphate + CTP + H(+) = 4-CDP-2-C-methyl-D-erythritol + diphosphate. It functions in the pathway isoprenoid biosynthesis; isopentenyl diphosphate biosynthesis via DXP pathway; isopentenyl diphosphate from 1-deoxy-D-xylulose 5-phosphate: step 2/6. In terms of biological role, catalyzes the formation of 4-diphosphocytidyl-2-C-methyl-D-erythritol from CTP and 2-C-methyl-D-erythritol 4-phosphate (MEP). The polypeptide is 2-C-methyl-D-erythritol 4-phosphate cytidylyltransferase (Prochlorococcus marinus (strain SARG / CCMP1375 / SS120)).